Reading from the N-terminus, the 341-residue chain is Serine proteinase inhibitor 2 (341 aa).

Belongs to the serpin family. Poxviruses subfamily.

Its subcellular location is the host cytoplasm. Its function is as follows. Viral serpin that inhibits both cysteine and serine proteinases involved in the regulation of host inflammatory and apoptosis processes. Major anti-apoptotic protein which inhibits both intrinsic and extrinsic pathways and strongly cleaves host CASP1 and CASP8 but is a rather poor inhibitor of host CASP3. Prevents the proteolytic activity of host interleukin-1-beta converting enzyme (ICE) and ICE-like enzymes. Can also block apoptosis through host tumor necrosis factor (TNF) receptor. The sequence is that of Serine proteinase inhibitor 2 (OPG199) from Bos taurus (Bovine).